The following is a 358-amino-acid chain: Cytochrome c peroxidase, mitochondrial (358 aa).

The N-terminal 38 residues, 1 to 38 (MAASRTATRTLRALRTSTRPALTAAPRAAFRQGGRRLY), are a transit peptide targeting the mitochondrion. Residue His-119 is the Proton acceptor of the active site. The segment at 192 to 214 (PYRPGRQDRDAAGCTPDGRLPDA) is disordered. His-242 contacts heme b. Trp-258 functions as the Tryptophan radical intermediate in the catalytic mechanism.

Belongs to the peroxidase family. Cytochrome c peroxidase subfamily. Forms a one-to-one complex with cytochrome c. Requires heme b as cofactor.

Its subcellular location is the mitochondrion matrix. The protein resides in the mitochondrion intermembrane space. The catalysed reaction is 2 Fe(II)-[cytochrome c] + H2O2 + 2 H(+) = 2 Fe(III)-[cytochrome c] + 2 H2O. Its function is as follows. Destroys radicals which are normally produced within the cells and which are toxic to biological systems. In Neurospora crassa (strain ATCC 24698 / 74-OR23-1A / CBS 708.71 / DSM 1257 / FGSC 987), this protein is Cytochrome c peroxidase, mitochondrial (ccp-1).